The primary structure comprises 137 residues: MMQPKRTKFRKQFKGRIHGNSKGGTDLNFGAFGLKALEPERVTARQIEAARRAITRHMKRAGRVWIRIFPDLPVTSKPTEVRMGKGKGSVDYWACRVAPGRVMFELDGVPEDVAREALRLGAAKLPIKTRFIQRIAE.

Belongs to the universal ribosomal protein uL16 family. In terms of assembly, part of the 50S ribosomal subunit.

Functionally, binds 23S rRNA and is also seen to make contacts with the A and possibly P site tRNAs. The chain is Large ribosomal subunit protein uL16 from Brucella abortus (strain S19).